A 329-amino-acid chain; its full sequence is Malate dehydrogenase (329 aa).

12–18 (GAAGQIG) contacts NAD(+). The substrate site is built by arginine 95 and arginine 101. NAD(+) contacts are provided by residues asparagine 108, glutamine 115, and 132–134 (VGN). 2 residues coordinate substrate: asparagine 134 and arginine 165. Histidine 190 acts as the Proton acceptor in catalysis.

This sequence belongs to the LDH/MDH superfamily. MDH type 2 family.

The enzyme catalyses (S)-malate + NAD(+) = oxaloacetate + NADH + H(+). Its function is as follows. Catalyzes the reversible oxidation of malate to oxaloacetate. The polypeptide is Malate dehydrogenase (Janthinobacterium sp. (strain Marseille) (Minibacterium massiliensis)).